The chain runs to 453 residues: Serine protease HTRA3 (453 aa).

Positions 1–17 (MQARALLLAALAALALA) are cleaved as a signal peptide. The IGFBP N-terminal domain occupies 21–84 (PAAPCPARCD…ECVRGLCRCR (64 aa)). 8 disulfide bridges follow: C25–C48, C29–C50, C34–C51, C39–C54, C62–C76, C70–C81, C83–C101, and C90–C126. A Kazal-like domain is found at 64 to 128 (GPLDSPCGES…RQLQKGACPL (65 aa)). A serine protease region spans residues 175–340 (GSGFIMSEAG…AIPSDRITRF (166 aa)). Active-site charge relay system residues include H191, D227, and S305. Residues 359–444 (IRMRTITPSL…EVRRGNDDLL (86 aa)) enclose the PDZ domain.

The protein belongs to the peptidase S1C family. Homotrimer. Interacts with TGFB1; the interaction inhibits TGFB-mediated signaling. Interacts with BMP4; the interaction inhibits BMP4-mediated signaling. Interacts with TGFB2 and GDF5. Interacts with MYH9. As to expression, widely expressed, with highest levels in both adult and fetal heart, ovary, uterus placenta, and bladder. In the endometrium, expressed in epithelial glands and the stroma. Also present in leukocytes. Isoform 1 is predominant in heart and skeletal muscle, whereas isoform 2 is predominant in placenta and kidney.

The protein localises to the secreted. Functionally, serine protease that cleaves beta-casein/CSN2 as well as several extracellular matrix (ECM) proteoglycans such as decorin/DCN, biglycan/BGN and fibronectin/FN1. Inhibits signaling mediated by TGF-beta family proteins possibly indirectly by degradation of these ECM proteoglycans. May act as a tumor suppressor. Negatively regulates, in vitro, trophoblast invasion during placental development and may be involved in the development of the placenta in vivo. May also have a role in ovarian development, granulosa cell differentiation and luteinization. The chain is Serine protease HTRA3 (HTRA3) from Homo sapiens (Human).